The primary structure comprises 21 residues: Bradykinin-potentiating peptide K12 (21 aa).

The interval 1–21 is disordered; the sequence is LRDYANRVINGGPVEAAGPPA.

In terms of tissue distribution, expressed by the venom gland.

The protein localises to the secreted. Functionally, inhibits angiotensin-converting enzyme (ACE), but does not serve as substrate for the enzyme. Potentiate bradykinin (BK) on the isolated guinea pig ileum as well as the isolated rat uterus for contraction. Also potentiates in vivo the depressor effect of BK on arterial blood pressure in the normotensive anesthetized rat. Intracerebroventricular injection into mice does not show toxic activity. The polypeptide is Bradykinin-potentiating peptide K12 (Buthus occitanus (Common European scorpion)).